The chain runs to 160 residues: Nucleotide-binding protein Ping_2261 (160 aa).

Belongs to the YajQ family.

Its function is as follows. Nucleotide-binding protein. The protein is Nucleotide-binding protein Ping_2261 of Psychromonas ingrahamii (strain DSM 17664 / CCUG 51855 / 37).